The primary structure comprises 545 residues: Afadin- and alpha-actinin-binding protein B (545 aa).

2 coiled-coil regions span residues 106–287 and 358–442; these read RSKE…SQRK and ARGD…AIRL. Positions 497-545 are disordered; sequence HDRHLASSGDHYQRPRKTLPITPSSKHSLTQRESVAWRDSSISPNGTDF. Polar residues-rich tracts occupy residues 517 to 529 and 536 to 545; these read ITPS…TQRE and SSISPNGTDF.

It belongs to the ADIP family. As to quaternary structure, interacts with WRAP73.

The protein resides in the cell junction. It localises to the adherens junction. Its subcellular location is the cytoplasm. It is found in the cytoskeleton. The protein localises to the microtubule organizing center. The protein resides in the centrosome. It localises to the centriolar satellite. Belongs to an adhesion system, which plays a role in the organization of homotypic, interneuronal and heterotypic cell-cell adherens junctions (AJs). Involved in cell movement. Acts as a centrosome maturation factor, probably by maintaining the integrity of the pericentriolar material and proper microtubule nucleation at mitotic spindle poles. The function seems to implicate at least in part WRAP73; the SSX2IP:WRAP73 complex is proposed to act as regulator of spindle anchoring at the mitotic centrosome. The sequence is that of Afadin- and alpha-actinin-binding protein B (ssx2ip-b) from Xenopus laevis (African clawed frog).